A 1732-amino-acid chain; its full sequence is Serine/threonine-protein kinase MRCK alpha (1732 aa).

The Protein kinase domain occupies 77 to 343 (FEILKVIGRG…IEDFKKHPFF (267 aa)). Residues 83 to 91 (IGRGAFGEV) and Lys-106 each bind ATP. The Proton acceptor role is filled by Asp-201. Phosphoserine; by autocatalysis occurs at positions 222 and 234. Thr-240 carries the post-translational modification Phosphothreonine; by autocatalysis. One can recognise an AGC-kinase C-terminal domain in the interval 344–414 (SGIDWDNIRN…TSSCVLSDRS (71 aa)). Coiled coils occupy residues 437-820 (NNLA…WEAQ) and 880-943 (LELQ…SEKG). A disordered region spans residues 968–1003 (ERSPSCTPASKGRRTVDSTPLSVHTPTLRKKGCPGS). A Phorbol-ester/DAG-type zinc finger spans residues 1012–1062 (THQFFVKSFTTPTKCHQCTSLMVGLIRQGCSCEVCGFSCHITCVNKAPTTC). The 120-residue stretch at 1082-1201 (GTAYEGHVRI…WVGVLSELHK (120 aa)) folds into the PH domain. Ser-1127 is subject to Phosphoserine. The 273-residue stretch at 1227–1499 (IKTTQAAAII…RPLNNEGSLN (273 aa)) folds into the CNH domain. Residue Ser-1545 is modified to Phosphoserine. A CRIB domain is found at 1571 to 1584 (ISNPTNFNHIAHMG). The tract at residues 1591 to 1732 (ILKDLPMNPR…ESTDRGSWDP (142 aa)) is disordered. The span at 1604-1619 (SRTVFSGSVSIPSITK) shows a compositional bias: polar residues. Residues Ser-1611, Ser-1613, Ser-1629, Ser-1651, Ser-1664, Ser-1669, and Ser-1693 each carry the phosphoserine modification. Residues 1625–1640 (GRSMSASSGLSARSSA) are compositionally biased toward low complexity. Residues 1665–1674 (PSEGSLSSGG) are compositionally biased toward low complexity. A compositionally biased stretch (low complexity) spans 1697-1707 (STASNSSNLSS). Residues Ser-1719 and Ser-1721 each carry the phosphoserine modification.

Belongs to the protein kinase superfamily. AGC Ser/Thr protein kinase family. DMPK subfamily. Homodimer and homotetramer via the coiled coil regions. Interacts tightly with GTP-bound but not GDP-bound CDC42. Forms a tripartite complex with MYO18A and LURAP1 with the latter acting as an adapter connecting CDC42BPA and MYO18A. LURAP1 binding results in activation of CDC42BPA by abolition of its negative autoregulation. Interacts with LURAP1. Interacts (via AGC-kinase C-terminal domain) with FAM89B/LRAP25 (via LRR repeat). Forms a tripartite complex with FAM89B/LRAP25 and LIMK1. Requires Mg(2+) as cofactor. Post-translationally, proteolytically cleaved by caspases upon apoptosis induction. The cleavage at Asp-478 by CASP3 increases its kinase activity (in vitro). Abundant in the heart, brain, skeletal muscle, kidney, and pancreas, with little or no expression in the lung and liver.

It is found in the cytoplasm. It localises to the cell projection. The protein resides in the lamellipodium. The enzyme catalyses L-seryl-[protein] + ATP = O-phospho-L-seryl-[protein] + ADP + H(+). The catalysed reaction is L-threonyl-[protein] + ATP = O-phospho-L-threonyl-[protein] + ADP + H(+). With respect to regulation, maintained in an inactive, closed conformation by an interaction between the kinase domain and the negative autoregulatory C-terminal coiled-coil region. Agonist binding to the phorbol ester binding site disrupts this, releasing the kinase domain to allow N-terminus-mediated dimerization and kinase activation by transautophosphorylation. Inhibited by chelerythrine chloride. Its function is as follows. Serine/threonine-protein kinase which is an important downstream effector of CDC42 and plays a role in the regulation of cytoskeleton reorganization and cell migration. Regulates actin cytoskeletal reorganization via phosphorylation of PPP1R12C and MYL9/MLC2. In concert with MYO18A and LURAP1, is involved in modulating lamellar actomyosin retrograde flow that is crucial to cell protrusion and migration. Phosphorylates: PPP1R12A, LIMK1 and LIMK2. May play a role in TFRC-mediated iron uptake. In concert with FAM89B/LRAP25 mediates the targeting of LIMK1 to the lamellipodium resulting in its activation and subsequent phosphorylation of CFL1 which is important for lamellipodial F-actin regulation. Triggers the formation of an extrusion apical actin ring required for epithelial extrusion of apoptotic cells. This Homo sapiens (Human) protein is Serine/threonine-protein kinase MRCK alpha.